The chain runs to 107 residues: Biphenyl 2,3-dioxygenase, ferredoxin component (107 aa).

The Rieske domain occupies 4–99 (TKICSSGDLA…VKLEGDDVLV (96 aa)). Residues cysteine 43, histidine 45, cysteine 62, and histidine 65 each coordinate [2Fe-2S] cluster.

Belongs to the bacterial ring-hydroxylating dioxygenase ferredoxin component family. As to quaternary structure, the multicomponent biphenyl dioxygenase system is composed of a ferredoxin reductase (BphA4), a ferredoxin (BphA3), and a terminal oxygenase (BphA1A2). It depends on [2Fe-2S] cluster as a cofactor.

The protein operates within xenobiotic degradation; biphenyl degradation. Its function is as follows. Ferredoxin component of the biphenyl dioxygenase system that catalyzes the stereospecific dihydroxylation of the aromatic ring of biphenyl, yielding a dihydrodiol compound. Is likely involved in biphenyl degradation that allows growth of Rhodococcus sp. strain RHA1 on biphenyl as the sole source of carbon and energy. The dioxygenase system can also use naphtalene and 4-chlorobiphenyl (4-CB) as substrates, as well as some polychlorinated biphenyls (PCB) such as 2,2'-dichlorobiphenyl, 2,3-dichlorobiphenyl and 2,5,2'-trichlorobiphenyl. It exhibits weak activity toward dibenzofuran and dibenzo-p-dioxin. Electrons are transferred from NADH to the [2Fe-2S] cluster in BphA1 via FAD of BphA4 and [2Fe-2S] cluster of BphA3. This Rhodococcus jostii (strain RHA1) protein is Biphenyl 2,3-dioxygenase, ferredoxin component.